The primary structure comprises 248 residues: DNA polymerase sliding clamp (248 aa).

It belongs to the PCNA family. Homotrimer. The subunits circularize to form a toroid; DNA passes through its center. Replication factor C (RFC) is required to load the toroid on the DNA.

Functionally, sliding clamp subunit that acts as a moving platform for DNA processing. Responsible for tethering the catalytic subunit of DNA polymerase and other proteins to DNA during high-speed replication. The sequence is that of DNA polymerase sliding clamp from Nitrosopumilus maritimus (strain SCM1).